A 118-amino-acid polypeptide reads, in one-letter code: Large ribosomal subunit protein bL20 (118 aa).

It belongs to the bacterial ribosomal protein bL20 family.

Its function is as follows. Binds directly to 23S ribosomal RNA and is necessary for the in vitro assembly process of the 50S ribosomal subunit. It is not involved in the protein synthesizing functions of that subunit. The sequence is that of Large ribosomal subunit protein bL20 from Thermosipho africanus (strain TCF52B).